Reading from the N-terminus, the 126-residue chain is Cyclin-dependent kinase 2-associated protein 2 (126 aa).

The interval 1–48 (MSYKPIAPAPSSTPGSSTPGPGTPVPTGSVPSPSGSVPGAGAPFRPLF) is disordered. Low complexity predominate over residues 9–43 (APSSTPGSSTPGPGTPVPTGSVPSPSGSVPGAGAP). The tract at residues 64 to 106 (PPGAQGSQSTYTDLLSVIEEMGKEIRPTYAGSKSAMERLKRGI) is interaction with CDK2.

This sequence belongs to the CDK2AP family. In terms of assembly, component of the nucleosome remodeling and deacetylase (NuRD) repressor complex, composed of core proteins MTA1, MTA2, MTA3, RBBP4, RBBP7, HDAC1, HDAC2, MBD2, MBD3, and peripherally associated proteins CDK2AP1, CDK2AP2, GATAD2A, GATAD2B, CHD3, CHD4 and CHD5. The exact stoichiometry of the NuRD complex is unknown, and some subunits such as MBD2 and MBD3, GATAD2A and GATAD2B, and CHD3, CHD4 and CHD5 define mutually exclusive NuRD complexes. Interacts with CDK2AP1. Interacts with CDK2. Interacts with MAPK1. Phosphorylated by MAPK1 and CDK2. Ubiquitous.

The protein localises to the cytoplasm. It localises to the nucleus. Its function is as follows. Acts as a component of the histone deacetylase NuRD complex which participates in the remodeling of chromatin. Inhibits cell cycle G1/S phase transition by repressing CDK2 expression and activation; represses CDK2 activation by inhibiting its interaction with cyclin E and A. Plays a role in regulating the self-renewal of embryonic stem cells (ESCs) and in maintaining cell survival during terminal differentiation of ESCs. Regulates microtubule organization of metaphase II oocytes. This chain is Cyclin-dependent kinase 2-associated protein 2 (CDK2AP2), found in Homo sapiens (Human).